A 513-amino-acid polypeptide reads, in one-letter code: Cyclin-dependent kinase C-2 (513 aa).

In terms of domain architecture, Protein kinase spans 25 to 325 (FEKLEQIGEG…AKDALDAEYF (301 aa)). Residues 31–39 (IGEGTYGQV) and Lys-54 each bind ATP. Thr-35 carries the post-translational modification Phosphothreonine. Residue Tyr-36 is modified to Phosphotyrosine. Residue Asp-164 is the Proton acceptor of the active site. Ser-191 bears the Phosphoserine mark. The residue at position 198 (Thr-198) is a Phosphothreonine. A compositionally biased stretch (basic and acidic residues) spans 336 to 348 (SLPKYEASHEFQT). The tract at residues 336 to 513 (SLPKYEASHE…RNQQQYGNWQ (178 aa)) is disordered. A compositionally biased stretch (low complexity) spans 417–433 (PNRYPQGGNQGGYNPNR). Composition is skewed to gly residues over residues 457–478 (GGGMGGAGGPRGGGGSGYGVGG) and 485–494 (GPYGASGPGR). Residues 497–513 (NYNQGGSRNQQQYGNWQ) are compositionally biased toward polar residues.

The protein belongs to the protein kinase superfamily. CMGC Ser/Thr protein kinase family. CDC2/CDKX subfamily.

The enzyme catalyses L-seryl-[protein] + ATP = O-phospho-L-seryl-[protein] + ADP + H(+). It catalyses the reaction L-threonyl-[protein] + ATP = O-phospho-L-threonyl-[protein] + ADP + H(+). It carries out the reaction [DNA-directed RNA polymerase] + ATP = phospho-[DNA-directed RNA polymerase] + ADP + H(+). This is Cyclin-dependent kinase C-2 (CDKC-2) from Oryza sativa subsp. japonica (Rice).